The sequence spans 191 residues: MGILYSEPICQAAYQNDFGQVWRWVKEDSSYANVQDGFNGDTPLICACRRGHVRIVSFLLRRNANVNLKNQKERTCLHYAVKKKFTFIDYLLIILLMPVLLIGYFLMVSKTKQNEALVRMLLDAGVEVNATDCYGCTALHYACEMKNQSLIPLLLEARADPTIKNKHGESSLDIARRLKFSQIELMLRKAL.

ANK repeat units lie at residues 39–68 (NGDT…NVNL), 72–100 (KERT…MPVL), 101–130 (LIGY…EVNA), and 134–163 (YGCT…DPTI).

This Homo sapiens (Human) protein is Ankyrin repeat domain-containing protein 22 (ANKRD22).